The chain runs to 472 residues: Methylenetetrahydrofolate--tRNA-(uracil-5-)-methyltransferase TrmFO (472 aa).

FAD is bound at residue 10–15 (GGGLAG).

It belongs to the MnmG family. TrmFO subfamily. FAD serves as cofactor.

The protein resides in the cytoplasm. It carries out the reaction uridine(54) in tRNA + (6R)-5,10-methylene-5,6,7,8-tetrahydrofolate + NADH + H(+) = 5-methyluridine(54) in tRNA + (6S)-5,6,7,8-tetrahydrofolate + NAD(+). The enzyme catalyses uridine(54) in tRNA + (6R)-5,10-methylene-5,6,7,8-tetrahydrofolate + NADPH + H(+) = 5-methyluridine(54) in tRNA + (6S)-5,6,7,8-tetrahydrofolate + NADP(+). Catalyzes the folate-dependent formation of 5-methyl-uridine at position 54 (M-5-U54) in all tRNAs. In Mesorhizobium japonicum (strain LMG 29417 / CECT 9101 / MAFF 303099) (Mesorhizobium loti (strain MAFF 303099)), this protein is Methylenetetrahydrofolate--tRNA-(uracil-5-)-methyltransferase TrmFO.